The following is a 305-amino-acid chain: Tyrosine recombinase XerC (305 aa).

Residues 4 to 95 (TSIQALINKW…AVKNFYRFLE (92 aa)) enclose the Core-binding (CB) domain. Residues 116 to 298 (LLPKALSEDD…SIKHLEAVYT (183 aa)) form the Tyr recombinase domain. Residues R159, K182, H250, R253, and H276 contribute to the active site. The active-site O-(3'-phospho-DNA)-tyrosine intermediate is Y285.

Belongs to the 'phage' integrase family. XerC subfamily. Forms a cyclic heterotetrameric complex composed of two molecules of XerC and two molecules of XerD.

The protein resides in the cytoplasm. In terms of biological role, site-specific tyrosine recombinase, which acts by catalyzing the cutting and rejoining of the recombining DNA molecules. The XerC-XerD complex is essential to convert dimers of the bacterial chromosome into monomers to permit their segregation at cell division. It also contributes to the segregational stability of plasmids. In Rickettsia peacockii (strain Rustic), this protein is Tyrosine recombinase XerC.